A 79-amino-acid polypeptide reads, in one-letter code: Small ribosomal subunit protein bS18 (79 aa).

The protein belongs to the bacterial ribosomal protein bS18 family. In terms of assembly, part of the 30S ribosomal subunit. Forms a tight heterodimer with protein bS6.

Functionally, binds as a heterodimer with protein bS6 to the central domain of the 16S rRNA, where it helps stabilize the platform of the 30S subunit. In Afipia carboxidovorans (strain ATCC 49405 / DSM 1227 / KCTC 32145 / OM5) (Oligotropha carboxidovorans), this protein is Small ribosomal subunit protein bS18.